The primary structure comprises 184 residues: Photosystem I assembly protein Ycf4 (184 aa).

A run of 2 helical transmembrane segments spans residues I19–G39 and I57–S77.

This sequence belongs to the Ycf4 family.

The protein resides in the plastid. It localises to the chloroplast thylakoid membrane. In terms of biological role, seems to be required for the assembly of the photosystem I complex. This Eucalyptus globulus subsp. globulus (Tasmanian blue gum) protein is Photosystem I assembly protein Ycf4.